The chain runs to 244 residues: Chlorosome protein I (244 aa).

In terms of domain architecture, 2Fe-2S ferredoxin-type spans 1-95 (MNLIINDKTA…TVKVLSRPEE (95 aa)). The [2Fe-2S] cluster site is built by cysteine 33, cysteine 39, cysteine 42, and cysteine 77.

The cofactor is [2Fe-2S] cluster.

The protein localises to the chlorosome. Could play a direct role in the oxidation or reduction of the quenching species formed in the chlorosome. In Chlorobaculum tepidum (strain ATCC 49652 / DSM 12025 / NBRC 103806 / TLS) (Chlorobium tepidum), this protein is Chlorosome protein I (csmI).